Here is a 365-residue protein sequence, read N- to C-terminus: Coxsackievirus and adenovirus receptor homolog (365 aa).

An N-terminal signal peptide occupies residues Met-1–Ser-19. Ig-like C2-type domains lie at Leu-20–Thr-136 and Pro-141–Asp-228. Residues Leu-20 to Thr-238 lie on the Extracellular side of the membrane. Cystine bridges form between Cys-41/Cys-120, Cys-146/Cys-223, and Cys-162/Cys-212. Residue Asn-106 is glycosylated (N-linked (GlcNAc...) asparagine). Residues Ile-239–Cys-259 traverse the membrane as a helical segment. 2 S-palmitoyl cysteine lipidation sites follow: Cys-259 and Cys-260. Residues Cys-260–Val-365 are Cytoplasmic-facing. Basic and acidic residues predominate over residues Tyr-269–Pro-282. The tract at residues Tyr-269–Lys-315 is disordered. The segment covering Ser-286–Lys-315 has biased composition (polar residues). 6 positions are modified to phosphoserine: Ser-297, Ser-304, Ser-306, Ser-323, Ser-332, and Ser-363. The short motif at Lys-360–Val-365 is the PDZ-binding element.

Monomer. May form homodimer. Interacts with LNX, MAGI1, DLG4, PRKCABP, TJP1 and CTNNB1. Interacts with MPDZ; recruits MPDZ to intercellular contact sites. Interacts with JAML (homodimeric form). In terms of processing, N-glycosylated. Palmitoylated on Cys-259 and/or Cys-260; required for proper localization to the plasma membrane. As to expression, expressed in heart, brain, spleen, lung, liver, muscle, kidney, testis, spleen and skeletal muscle.

Its subcellular location is the cell membrane. The protein localises to the basolateral cell membrane. It localises to the cell junction. It is found in the tight junction. The protein resides in the adherens junction. In terms of biological role, component of the epithelial apical junction complex that may function as a homophilic cell adhesion molecule and is essential for tight junction integrity. Also involved in transepithelial migration of leukocytes through adhesive interactions with JAML a transmembrane protein of the plasma membrane of leukocytes. The interaction between both receptors also mediates the activation of gamma-delta T-cells, a subpopulation of T-cells residing in epithelia and involved in tissue homeostasis and repair. Upon epithelial CXADR-binding, JAML induces downstream cell signaling events in gamma-delta T-cells through PI3-kinase and MAP kinases. It results in proliferation and production of cytokines and growth factors by T-cells that in turn stimulate epithelial tissues repair. The protein is Coxsackievirus and adenovirus receptor homolog (Cxadr) of Rattus norvegicus (Rat).